The chain runs to 413 residues: Patatin-like protein 3 (413 aa).

The region spanning 54–245 (LSVDGGARPE…ALGNPTAAAI (192 aa)) is the PNPLA domain. Positions 58–61 (GGAR) match the GGXR motif. Residue S100 is the Nucleophile of the active site. The tract at residues 384-413 (EHGRRKQHVPPAASGGGGGGLDCHVSKKQP) is disordered.

The protein belongs to the patatin family.

In terms of biological role, possesses non-specific lipolytic acyl hydrolase (LAH) activity. Hydrolyzes phospholipids as well as galactolipids. May play a role in disease resistance. This Oryza sativa subsp. indica (Rice) protein is Patatin-like protein 3 (PLP3).